The primary structure comprises 946 residues: Translation initiation factor IF-2 (946 aa).

Disordered stretches follow at residues 58 to 250 (AERK…AVVI) and 301 to 324 (VSRD…KSLS). Composition is skewed to low complexity over residues 102 to 165 (EPPQ…QPAA) and 174 to 185 (AQPSAPQPAAAQ). Positions 186–211 (PRPPQPPMPSRPPPAGYRPAPPPGAR) are enriched in pro residues. Residues 212–229 (PPMSAAPGAPAQPGAAAQ) are compositionally biased toward low complexity. In terms of domain architecture, tr-type G spans 445–614 (IRPPVVTVMG…ALQSEVLELK (170 aa)). The tract at residues 454 to 461 (GHVDHGKT) is G1. A GTP-binding site is contributed by 454-461 (GHVDHGKT). Residues 479 to 483 (GITQH) form a G2 region. The interval 500–503 (DTPG) is G3. GTP-binding positions include 500-504 (DTPGH) and 554-557 (NKVD). A G4 region spans residues 554-557 (NKVD). Residues 590–592 (SAR) are G5.

The protein belongs to the TRAFAC class translation factor GTPase superfamily. Classic translation factor GTPase family. IF-2 subfamily.

It localises to the cytoplasm. Functionally, one of the essential components for the initiation of protein synthesis. Protects formylmethionyl-tRNA from spontaneous hydrolysis and promotes its binding to the 30S ribosomal subunits. Also involved in the hydrolysis of GTP during the formation of the 70S ribosomal complex. The chain is Translation initiation factor IF-2 from Anaeromyxobacter sp. (strain K).